Here is a 202-residue protein sequence, read N- to C-terminus: MEHYISLFVKAVFIENLALSFFLGMCTFLAVSKKVTTSIGLGVAVIVVLGISVPVNNLVYHAVLAPGSLTWLGYPDADLSFLRFLTFIGVIAALVQILEMALDKFFPALYNALGIFLPLITVNCAIFGAVSFMVERNYNFGESVVYGIGAGVGWALAITLLAGIREKMKYSDVPDGLRGLGITFITVGLMALGFMSFSGISL.

The next 6 helical transmembrane spans lie at 11–31 (AVFI…FLAV), 35–55 (VTTS…SVPV), 81–101 (FLRF…LEMA), 114–134 (GIFL…SFMV), 144–164 (VVYG…LAGI), and 180–200 (LGIT…FSGI).

Belongs to the NqrDE/RnfAE family. As to quaternary structure, composed of six subunits; NqrA, NqrB, NqrC, NqrD, NqrE and NqrF.

Its subcellular location is the cell inner membrane. The enzyme catalyses a ubiquinone + n Na(+)(in) + NADH + H(+) = a ubiquinol + n Na(+)(out) + NAD(+). Functionally, NQR complex catalyzes the reduction of ubiquinone-1 to ubiquinol by two successive reactions, coupled with the transport of Na(+) ions from the cytoplasm to the periplasm. NqrA to NqrE are probably involved in the second step, the conversion of ubisemiquinone to ubiquinol. In Pseudoalteromonas translucida (strain TAC 125), this protein is Na(+)-translocating NADH-quinone reductase subunit E.